We begin with the raw amino-acid sequence, 144 residues long: Transcriptional regulator MraZ (144 aa).

2 consecutive SpoVT-AbrB domains span residues 5–47 and 77–120; these read TYTP…PRAE and TDEQ…DAQA.

This sequence belongs to the MraZ family. As to quaternary structure, forms oligomers.

Its subcellular location is the cytoplasm. It is found in the nucleoid. This chain is Transcriptional regulator MraZ, found in Mycolicibacterium vanbaalenii (strain DSM 7251 / JCM 13017 / BCRC 16820 / KCTC 9966 / NRRL B-24157 / PYR-1) (Mycobacterium vanbaalenii).